The chain runs to 875 residues: Peptidyl-glycine alpha-amidating monooxygenase B (875 aa).

The signal sequence occupies residues 1-39 (MDMASLISSLLVLFLIFQNSCYCFRSPLSVFKRYEESTR). The peptidylglycine alpha-hydroxylating monooxygenase stretch occupies residues 3–394 (MASLISSLLV…KREEEEVLNQ (392 aa)). Topologically, residues 40–763 (SLSNDCLGTT…PSVVQESSAG (724 aa)) are intragranular. 5 disulfides stabilise this stretch: Cys-45–Cys-184, Cys-79–Cys-124, Cys-112–Cys-129, Cys-225–Cys-332, and Cys-291–Cys-313. Positions 105 and 106 each coordinate Cu(2+). 4 residues coordinate Cu(2+): His-170, His-240, His-242, and Met-312. The interval 395-716 (DVHLEEDTDW…SPSKAEHRSV (322 aa)) is peptidyl-alpha-hydroxyglycine alpha-amidating lyase. Residue Arg-430 participates in a protein binding. N-linked (GlcNAc...) asparagine glycosylation is present at Asn-465. NHL repeat units lie at residues 467-508 (SKVL…VGAE), 516-561 (LGRA…FSPN), and 569-613 (GEET…FHAK). 2 disulfide bridges follow: Cys-530/Cys-551 and Cys-598/Cys-609. 2 residues coordinate a protein: Tyr-550 and Arg-602. Asn-662 carries N-linked (GlcNAc...) asparagine glycosylation. The NHL 4 repeat unit spans residues 666–709 (GDILDTFIPARKNFEMPHDIAAGDDGTVYVGDAHANAVWKFSPS). A disordered region spans residues 735–755 (HMRSRPKTNESVGQQTQEKPS). Asn-743 carries N-linked (GlcNAc...) asparagine glycosylation. The segment covering 743–755 (NESVGQQTQEKPS) has biased composition (polar residues). The helical transmembrane segment at 764-787 (VSFVLIITLLIIPVVVLIAIAIFI) threads the bilayer. The Cytoplasmic segment spans residues 788–875 (RWRKVRMYGG…APPIPPVSSS (88 aa)). The disordered stretch occupies residues 837–875 (KGFDRLSTEGSDQEKDDDDDGSDSEEEYSAPPIPPVSSS). Acidic residues predominate over residues 850–864 (EKDDDDDGSDSEEEY).

It in the C-terminal section; belongs to the peptidyl-alpha-hydroxyglycine alpha-amidating lyase family. The protein in the N-terminal section; belongs to the copper type II ascorbate-dependent monooxygenase family. Monomer. Zn(2+) is required as a cofactor. It depends on Cu(2+) as a cofactor.

The protein localises to the cytoplasmic vesicle. Its subcellular location is the secretory vesicle membrane. The catalysed reaction is a [peptide]-C-terminal glycine + 2 L-ascorbate + O2 = a [peptide]-C-terminal (2S)-2-hydroxyglycine + 2 monodehydro-L-ascorbate radical + H2O. The enzyme catalyses a [peptide]-C-terminal (2S)-2-hydroxyglycine = a [peptide]-C-terminal amide + glyoxylate. In terms of biological role, bifunctional enzyme that catalyzes amidation of the C-terminus of proteins. Alpha-amidation is present at the C-terminus of many endocrine hormones and neuropeptides and is required for their activity. C-terminal amidation also takes place in response to protein fragmentation triggered by oxidative stress, promoting degradation of amidated protein fragments by the proteasome. Alpha-amidation involves two sequential reactions, both of which are catalyzed by separate catalytic domains of the enzyme. The first step, catalyzed by peptidyl alpha-hydroxylating monooxygenase (PHM) domain, is the copper-, ascorbate-, and O2- dependent stereospecific hydroxylation (with S stereochemistry) at the alpha-carbon (C-alpha) of the C-terminal glycine of the peptidylglycine substrate. The second step, catalyzed by the peptidylglycine amidoglycolate lyase (PAL) domain, is the zinc-dependent cleavage of the N-C-alpha bond, producing the alpha-amidated peptide and glyoxylate. The sequence is that of Peptidyl-glycine alpha-amidating monooxygenase B (pam-b) from Xenopus laevis (African clawed frog).